The primary structure comprises 414 residues: MSGPGLLVELLGEKLVNSEREEADVQALGSRVSLIGLLFGCGMSAPCLQLLPGLKDFYCKTRDRLEIVFVSSDPDQKKWQLFVKDMPWLALPYQEKHRKLKLWNKFRISNIPSLIFIEASTVKTVCRNGLLLVKDDPEGLEFPWGPKPFCEVIAGPLIRNNSQSQESSTLEGSYVGIYFSAYWCPPCRSLTRVLVESYRKIKESGQKFEIVLVSADRSEESFKQYFSEMPWLAVPYSDEARRSRLNRLYGIQGIPNLIILDPKGEVITRQGRVEVLRDIDCKEFPWHPKPVVELTELNAVQLNEGPCLVLFVDSEDEGESEAAKQLIQPIAEKIIAQHKAKDEDAPLLFFVAGEDDMTDSLRDFTNLPEAAPLLTILDMSARAKYVMDVEEITPEIVQSFVTDFLAEKLKPEPI.

Residues 131 to 305 enclose the Thioredoxin domain; sequence LLVKDDPEGL…ELNAVQLNEG (175 aa).

Belongs to the nucleoredoxin family.

The protein resides in the cytoplasm. It localises to the cytosol. The protein localises to the nucleus. It catalyses the reaction [protein]-dithiol + NAD(+) = [protein]-disulfide + NADH + H(+). It carries out the reaction [protein]-dithiol + NADP(+) = [protein]-disulfide + NADPH + H(+). Functionally, functions as a redox-dependent negative regulator of the Wnt signaling pathway. This chain is Nucleoredoxin (nxn), found in Xenopus laevis (African clawed frog).